The sequence spans 286 residues: MDVSIPKSQHKTVCRTEYGTLQKVILCKPEHMTIKDVINETQKHFEDDNIHVKTANDQHSRLVEALRSHNVEVVLLPVRDGLPEQVFTRDIGFVIGEKAFLSSMTEPIRQGEEAVIKDFFHSQGISYTRMLDTSIEGGDVIIDDDIVYVGISQRTDISAIGQLEEALPEYTIVPVKLHEKFLHLDCVFNIISESEALIYSQAIEPDAADMLAKRYDLIEVPEDEQFTLGTNVLSIGKKTIISLPGNRHVNQQLSKRGYHIIEIDLSEIIKSGGSFRCCTMPLIRGE.

Histidine 183 acts as the Proton donor in catalysis. Cysteine 277 functions as the Nucleophile in the catalytic mechanism.

The protein belongs to the DDAH family.

This is an uncharacterized protein from Bacillus subtilis (strain 168).